The following is a 401-amino-acid chain: Glycerol-3-phosphate dehydrogenase [NAD(+)] 1 (401 aa).

Residues 40–45 (GSGNWG), phenylalanine 128, lysine 151, and alanine 184 contribute to the NAD(+) site. Residue lysine 151 coordinates substrate. The active-site Proton acceptor is the lysine 244. NAD(+) contacts are provided by arginine 309 and glutamine 338. 309 to 310 (RN) contacts substrate.

This sequence belongs to the NAD-dependent glycerol-3-phosphate dehydrogenase family.

The protein localises to the cytoplasm. The enzyme catalyses sn-glycerol 3-phosphate + NAD(+) = dihydroxyacetone phosphate + NADH + H(+). The chain is Glycerol-3-phosphate dehydrogenase [NAD(+)] 1 (GPD1) from Zygosaccharomyces rouxii.